A 430-amino-acid chain; its full sequence is Gamma-glutamyl phosphate reductase (430 aa).

Belongs to the gamma-glutamyl phosphate reductase family.

Its subcellular location is the cytoplasm. It carries out the reaction L-glutamate 5-semialdehyde + phosphate + NADP(+) = L-glutamyl 5-phosphate + NADPH + H(+). It functions in the pathway amino-acid biosynthesis; L-proline biosynthesis; L-glutamate 5-semialdehyde from L-glutamate: step 2/2. Its function is as follows. Catalyzes the NADPH-dependent reduction of L-glutamate 5-phosphate into L-glutamate 5-semialdehyde and phosphate. The product spontaneously undergoes cyclization to form 1-pyrroline-5-carboxylate. The protein is Gamma-glutamyl phosphate reductase of Methylococcus capsulatus (strain ATCC 33009 / NCIMB 11132 / Bath).